A 444-amino-acid polypeptide reads, in one-letter code: Phosphoglucosamine mutase (444 aa).

Ser102 serves as the catalytic Phosphoserine intermediate. The Mg(2+) site is built by Ser102, Asp241, Asp243, and Asp245. Ser102 carries the post-translational modification Phosphoserine.

Belongs to the phosphohexose mutase family. It depends on Mg(2+) as a cofactor. Post-translationally, activated by phosphorylation.

It carries out the reaction alpha-D-glucosamine 1-phosphate = D-glucosamine 6-phosphate. Functionally, catalyzes the conversion of glucosamine-6-phosphate to glucosamine-1-phosphate. The polypeptide is Phosphoglucosamine mutase (Leptothrix cholodnii (strain ATCC 51168 / LMG 8142 / SP-6) (Leptothrix discophora (strain SP-6))).